We begin with the raw amino-acid sequence, 318 residues long: Pantothenate kinase (318 aa).

96–103 (GSVAVGKS) serves as a coordination point for ATP.

Belongs to the prokaryotic pantothenate kinase family.

It localises to the cytoplasm. The catalysed reaction is (R)-pantothenate + ATP = (R)-4'-phosphopantothenate + ADP + H(+). It functions in the pathway cofactor biosynthesis; coenzyme A biosynthesis; CoA from (R)-pantothenate: step 1/5. This chain is Pantothenate kinase, found in Coxiella burnetii (strain Dugway 5J108-111).